A 265-amino-acid polypeptide reads, in one-letter code: Iron(3+)-hydroxamate import ATP-binding protein FhuC (265 aa).

Residues 12–248 (FALRNISFRV…ETLEMIYGIP (237 aa)) form the ABC transporter domain. ATP-binding positions include 44–51 (GHNGSGKS) and 168–179 (CLLLDEPTSALD).

It belongs to the ABC transporter superfamily. Iron (Fe3+)-hydroxamate importer (TC 3.A.1.14.7) family. In terms of assembly, the complex is composed of two ATP-binding proteins (FhuC), a transmembrane protein (FhuB) and a solute-binding protein (FhuD). FhuC interacts with FhuB.

Its subcellular location is the cell inner membrane. It catalyses the reaction ATP + H2O + Fe(3+)-hydroxamate complex-[hydroxamate-binding protein]Side 1 = ADP + phosphate + Fe(3+)-hydroxamate complexSide 2 + [hydroxamate-binding protein]Side 1.. Its activity is regulated as follows. ATPase activity is inhibited by vanadate. In terms of biological role, part of the ABC transporter complex FhuCDB involved in iron(3+)-hydroxamate import. Responsible for energy coupling to the transport system. The sequence is that of Iron(3+)-hydroxamate import ATP-binding protein FhuC (fhuC) from Escherichia coli (strain K12).